We begin with the raw amino-acid sequence, 72 residues long: Translation initiation factor IF-1 (72 aa).

The S1-like domain occupies 1 to 72; sequence MAKEDCIEMQ…SKARIIFRAR (72 aa).

Belongs to the IF-1 family. In terms of assembly, component of the 30S ribosomal translation pre-initiation complex which assembles on the 30S ribosome in the order IF-2 and IF-3, IF-1 and N-formylmethionyl-tRNA(fMet); mRNA recruitment can occur at any time during PIC assembly.

It is found in the cytoplasm. Its function is as follows. One of the essential components for the initiation of protein synthesis. Stabilizes the binding of IF-2 and IF-3 on the 30S subunit to which N-formylmethionyl-tRNA(fMet) subsequently binds. Helps modulate mRNA selection, yielding the 30S pre-initiation complex (PIC). Upon addition of the 50S ribosomal subunit IF-1, IF-2 and IF-3 are released leaving the mature 70S translation initiation complex. The protein is Translation initiation factor IF-1 of Haemophilus ducreyi (strain 35000HP / ATCC 700724).